Here is a 117-residue protein sequence, read N- to C-terminus: Prefoldin subunit beta (117 aa).

Belongs to the prefoldin subunit beta family. In terms of assembly, heterohexamer of two alpha and four beta subunits.

It is found in the cytoplasm. Functionally, molecular chaperone capable of stabilizing a range of proteins. Seems to fulfill an ATP-independent, HSP70-like function in archaeal de novo protein folding. The sequence is that of Prefoldin subunit beta (pfdB) from Pyrococcus abyssi (strain GE5 / Orsay).